We begin with the raw amino-acid sequence, 404 residues long: MEELGLKSTFPYEYGSDFTMIRTEMLNTTKSETTILFSNIKSILAIIWKYSFTFLRSFSDSIKLIIDDVVTIGSRNFAERLQIEAKKNNDQEDIWASTIILGVIIGYLISSIKRKNTFPIMPTSSPKIDDCRFKTGDTISIVINFNEDCLNNRSDVTEERNYEESTVLHSKESVLSIGRQNMVTLNQSDENFTYGNFDEYDLLTKDYTTEVLTRSPGSNPEFKAVVNNTLLDSANETPFKGIEKSINETMVKVPMGCDVSLSHYGRQYAPGNISIMRSFTARDNTKSVSREIRDICKSFLIIKSQFGDELFLTMFMEKPVFFDNNIPIEITGAYREKRERLDEVIHKDLIRYDEVQNLTRIRNLLRVKSQKICSRRHNSSVPTKKLLVNDKGATSILLWYSNYS.

2 helical membrane-spanning segments follow: residues 35–55 and 92–112; these read ILFSNIKSILAIIWKYSFTFL and EDIWASTIILGVIIGYLISSI.

Its subcellular location is the membrane. This is an uncharacterized protein from Saccharomyces cerevisiae (strain ATCC 204508 / S288c) (Baker's yeast).